Here is a 335-residue protein sequence, read N- to C-terminus: Dihydroorotate dehydrogenase (quinone) (335 aa).

FMN-binding positions include 59-63 and Thr-83; that span reads AGLDK. Lys-63 contributes to the substrate binding site. 108 to 112 is a binding site for substrate; it reads NRMGF. Positions 136 and 169 each coordinate FMN. Asn-169 provides a ligand contact to substrate. Ser-172 (nucleophile) is an active-site residue. Asn-174 contacts substrate. Lys-214 and Thr-242 together coordinate FMN. 243-244 provides a ligand contact to substrate; that stretch reads NT. Residues Gly-265, Gly-294, and 315-316 each bind FMN; that span reads YS.

This sequence belongs to the dihydroorotate dehydrogenase family. Type 2 subfamily. In terms of assembly, monomer. FMN is required as a cofactor.

It localises to the cell membrane. The enzyme catalyses (S)-dihydroorotate + a quinone = orotate + a quinol. The protein operates within pyrimidine metabolism; UMP biosynthesis via de novo pathway; orotate from (S)-dihydroorotate (quinone route): step 1/1. In terms of biological role, catalyzes the conversion of dihydroorotate to orotate with quinone as electron acceptor. In Neisseria gonorrhoeae (strain ATCC 700825 / FA 1090), this protein is Dihydroorotate dehydrogenase (quinone).